We begin with the raw amino-acid sequence, 366 residues long: A-type ATP synthase subunit C (366 aa).

This sequence belongs to the V-ATPase V0D/AC39 subunit family. Has multiple subunits with at least A(3), B(3), C, D, E, F, H, I and proteolipid K(x).

The protein localises to the cell membrane. In terms of biological role, component of the A-type ATP synthase that produces ATP from ADP in the presence of a proton gradient across the membrane. The protein is A-type ATP synthase subunit C of Thermococcus onnurineus (strain NA1).